Here is a 455-residue protein sequence, read N- to C-terminus: Growth/differentiation factor 6 (455 aa).

The first 22 residues, 1 to 22, serve as a signal peptide directing secretion; the sequence is MDTPRVLLSAVFLISFLWDLPG. Positions 23–335 are excised as a propeptide; it reads FQQASISSSS…LPSPGRRRRR (313 aa). The segment at 29–93 is disordered; sequence SSSSSSAELG…EPPGRGPRVV (65 aa). Basic and acidic residues predominate over residues 45 to 76; it reads SRKEGKMQRAPRDSDAGREGQEPQPRPQDEPR. The span at 77–91 shows a compositional bias: low complexity; that stretch reads AQQPRAQEPPGRGPR. Asparagine 114 carries an N-linked (GlcNAc...) asparagine glycan. Disordered stretches follow at residues 244–267 and 300–351; these read EAEARARGPQQPPPPDLRSLGFGR and AEAA…KKSR. Over residues 330 to 351 the composition is skewed to basic residues; the sequence is GRRRRRTAFASRHGKRHGKKSR. 3 disulfide bridges follow: cysteine 354–cysteine 420, cysteine 383–cysteine 452, and cysteine 387–cysteine 454.

The protein belongs to the TGF-beta family. In terms of assembly, homodimer; disulfide-linked.

It is found in the secreted. Growth factor that controls proliferation and cellular differentiation in the retina and bone formation. Plays a key role in regulating apoptosis during retinal development. Establishes dorsal-ventral positional information in the retina and controls the formation of the retinotectal map. Required for normal formation of bones and joints in the limbs, skull, digits and axial skeleton. Plays a key role in establishing boundaries between skeletal elements during development. Regulation of GDF6 expression seems to be a mechanism for evolving species-specific changes in skeletal structures. Seems to positively regulate differentiation of chondrogenic tissue through the growth factor receptors subunits BMPR1A, BMPR1B, BMPR2 and ACVR2A, leading to the activation of SMAD1-SMAD5-SMAD8 complex. The regulation of chondrogenic differentiation is inhibited by NOG. Also involved in the induction of adipogenesis from mesenchymal stem cells. This mechanism acts through the growth factor receptors subunits BMPR1A, BMPR2 and ACVR2A and the activation of SMAD1-SMAD5-SMAD8 complex and MAPK14/p38. The protein is Growth/differentiation factor 6 (GDF6) of Homo sapiens (Human).